The chain runs to 427 residues: Dihydroorotase (427 aa).

Zn(2+) is bound by residues His-60 and His-62. Residues 62–64 and Asn-94 contribute to the substrate site; that span reads HFR. Residues Asp-152, His-179, and His-232 each contribute to the Zn(2+) site. Asn-278 contributes to the substrate binding site. Asp-305 contacts Zn(2+). Asp-305 is a catalytic residue. Residues His-309 and 323–324 contribute to the substrate site; that span reads FG.

The protein belongs to the metallo-dependent hydrolases superfamily. DHOase family. Class I DHOase subfamily. Zn(2+) is required as a cofactor.

The enzyme catalyses (S)-dihydroorotate + H2O = N-carbamoyl-L-aspartate + H(+). It functions in the pathway pyrimidine metabolism; UMP biosynthesis via de novo pathway; (S)-dihydroorotate from bicarbonate: step 3/3. Functionally, catalyzes the reversible cyclization of carbamoyl aspartate to dihydroorotate. This is Dihydroorotase from Enterococcus faecalis (strain ATCC 700802 / V583).